Here is a 334-residue protein sequence, read N- to C-terminus: Putative ankyrin repeat protein RBE_0347 (334 aa).

ANK repeat units lie at residues 80–90 (EQGINPNIQDS), 91–120 (SGNTLLLYACQSSLVEVVQFLLKKGANPNI), 124–161 (SDNTPLSKIISNRFIDKTEIYIAKLLLQNGALTELKDF), and 162–191 (VGFTPIQSATQYGHTEIVKSLIQNGADINV).

The protein is Putative ankyrin repeat protein RBE_0347 of Rickettsia bellii (strain RML369-C).